Here is a 215-residue protein sequence, read N- to C-terminus: Adenylate kinase (215 aa).

ATP is bound at residue 10–15; the sequence is GAGKGT. The NMP stretch occupies residues 30-59; that stretch reads STGDILRANVRDGTKLGKEAKGYMDKGELV. AMP contacts are provided by residues Thr-31, Arg-36, 57–59, 85–88, and Gln-92; these read ELV and GYPR. Residues 126–162 form an LID region; the sequence is GRYVCTCGESYHMKFNPPKKENVCDACGADLYQRDDD. Arg-127 contributes to the ATP binding site. Zn(2+) contacts are provided by Cys-130 and Cys-132. 135–136 serves as a coordination point for ATP; sequence SY. Positions 149 and 152 each coordinate Zn(2+). Residues Arg-159 and Arg-170 each contribute to the AMP site. ATP is bound at residue Gly-198.

This sequence belongs to the adenylate kinase family. In terms of assembly, monomer.

The protein localises to the cytoplasm. The catalysed reaction is AMP + ATP = 2 ADP. It functions in the pathway purine metabolism; AMP biosynthesis via salvage pathway; AMP from ADP: step 1/1. Functionally, catalyzes the reversible transfer of the terminal phosphate group between ATP and AMP. Plays an important role in cellular energy homeostasis and in adenine nucleotide metabolism. In Methanococcoides burtonii (strain DSM 6242 / NBRC 107633 / OCM 468 / ACE-M), this protein is Adenylate kinase.